A 689-amino-acid chain; its full sequence is Glycine--tRNA ligase beta subunit (689 aa).

It belongs to the class-II aminoacyl-tRNA synthetase family. As to quaternary structure, tetramer of two alpha and two beta subunits.

It is found in the cytoplasm. The catalysed reaction is tRNA(Gly) + glycine + ATP = glycyl-tRNA(Gly) + AMP + diphosphate. This Escherichia coli O8 (strain IAI1) protein is Glycine--tRNA ligase beta subunit.